A 92-amino-acid chain; its full sequence is Probable Fe(2+)-trafficking protein (92 aa).

It belongs to the Fe(2+)-trafficking protein family.

In terms of biological role, could be a mediator in iron transactions between iron acquisition and iron-requiring processes, such as synthesis and/or repair of Fe-S clusters in biosynthetic enzymes. The polypeptide is Probable Fe(2+)-trafficking protein (Anaeromyxobacter sp. (strain Fw109-5)).